A 488-amino-acid chain; its full sequence is Aspartyl/glutamyl-tRNA(Asn/Gln) amidotransferase subunit B (488 aa).

The protein belongs to the GatB/GatE family. GatB subfamily. As to quaternary structure, heterotrimer of A, B and C subunits.

The enzyme catalyses L-glutamyl-tRNA(Gln) + L-glutamine + ATP + H2O = L-glutaminyl-tRNA(Gln) + L-glutamate + ADP + phosphate + H(+). The catalysed reaction is L-aspartyl-tRNA(Asn) + L-glutamine + ATP + H2O = L-asparaginyl-tRNA(Asn) + L-glutamate + ADP + phosphate + 2 H(+). In terms of biological role, allows the formation of correctly charged Asn-tRNA(Asn) or Gln-tRNA(Gln) through the transamidation of misacylated Asp-tRNA(Asn) or Glu-tRNA(Gln) in organisms which lack either or both of asparaginyl-tRNA or glutaminyl-tRNA synthetases. The reaction takes place in the presence of glutamine and ATP through an activated phospho-Asp-tRNA(Asn) or phospho-Glu-tRNA(Gln). This chain is Aspartyl/glutamyl-tRNA(Asn/Gln) amidotransferase subunit B, found in Ralstonia pickettii (strain 12J).